Reading from the N-terminus, the 411-residue chain is Anaerobic nitric oxide reductase flavorubredoxin homolog (411 aa).

A zinc metallo-hydrolase region spans residues 30–210; that stretch reads LRGSSYNSYL…PFSRLVTPKI (181 aa). Fe cation contacts are provided by H79, E81, D83, H147, D166, H227, C360, C363, C393, and C396. The Rubredoxin-like domain occupies 355 to 406; that stretch reads GPRMQCSVCQWIYDPAKGEPMQDVAPGTPWSEVPDNFLCPECSLGKDVFDEL.

In the N-terminal section; belongs to the zinc metallo-hydrolase group 3 family. In terms of assembly, homotetramer. The cofactor is Fe cation.

It is found in the cytoplasm. It participates in nitrogen metabolism; nitric oxide reduction. Its function is as follows. Anaerobic nitric oxide reductase; uses NADH to detoxify nitric oxide (NO), protecting several 4Fe-4S NO-sensitive enzymes. Has at least 2 reductase partners, only one of which (NorW, flavorubredoxin reductase) has been identified. NO probably binds to the di-iron center. Also able to function as an aerobic oxygen reductase. The chain is Anaerobic nitric oxide reductase flavorubredoxin homolog from Escherichia coli O157:H7.